A 401-amino-acid polypeptide reads, in one-letter code: Argininosuccinate synthase (401 aa).

9 to 17 (AYSGGLDTS) serves as a coordination point for ATP. Tyr88 is a binding site for L-citrulline. Residue Gly118 coordinates ATP. The L-aspartate site is built by Thr120, Asn124, and Asp125. Asn124 lines the L-citrulline pocket. The L-citrulline site is built by Arg128, Ser177, Ser186, Glu262, and Tyr274.

It belongs to the argininosuccinate synthase family. Type 1 subfamily. Homotetramer.

The protein localises to the cytoplasm. It catalyses the reaction L-citrulline + L-aspartate + ATP = 2-(N(omega)-L-arginino)succinate + AMP + diphosphate + H(+). The protein operates within amino-acid biosynthesis; L-arginine biosynthesis; L-arginine from L-ornithine and carbamoyl phosphate: step 2/3. This is Argininosuccinate synthase from Chlorobaculum parvum (strain DSM 263 / NCIMB 8327) (Chlorobium vibrioforme subsp. thiosulfatophilum).